A 190-amino-acid polypeptide reads, in one-letter code: Zinc finger C2H2 protein ECU03_0790 (190 aa).

4 consecutive C2H2-type zinc fingers follow at residues 4–27 (RCCF…LNTH), 33–55 (YKCD…KKKH), 85–108 (YKCG…ESHH), and 119–142 (HVCE…RSVH).

In Encephalitozoon cuniculi (strain GB-M1) (Microsporidian parasite), this protein is Zinc finger C2H2 protein ECU03_0790.